We begin with the raw amino-acid sequence, 904 residues long: Patched domain-containing protein 4 (904 aa).

Residues 41 to 61 (HPVFFLTVPAVLTITFGLSAL) traverse the membrane as a helical segment. N-linked (GlcNAc...) asparagine glycosylation is present at Asn-149. Residues 291–450 (TRSKVLVSLV…FSFFGSCLVF (160 aa)) enclose the SSD domain. A run of 6 helical transmembrane segments spans residues 295–312 (VLVS…SSSM), 323–343 (GLLG…IFFI), 351–371 (TLLG…FELL), 394–414 (VMVT…MGAS), 431–451 (VSIL…LVFA), and 523–543 (PFVV…CLQI). N-linked (GlcNAc...) asparagine glycosylation is present at Asn-625. The next 3 membrane-spanning stretches (helical) occupy residues 718–738 (PVLI…FLVI), 744–764 (FWLI…MTLW), and 771–791 (ISIL…APLL). The N-linked (GlcNAc...) asparagine glycan is linked to Asn-820. 2 helical membrane passes run 823–843 (SFLI…FTLF) and 845–865 (CLLL…PVFL).

This sequence belongs to the patched family.

It localises to the membrane. Its function is as follows. Could act as a repressor of canonical hedgehog signaling by antagonizing the effects of SMO, as suggested by down-regulation of hedgehog target genes, including GLI1, PTCH1, and PTCH2 in PTCHD4-expressing cells. The chain is Patched domain-containing protein 4 (Ptchd4) from Mus musculus (Mouse).